Reading from the N-terminus, the 264-residue chain is Thymidylate synthase (264 aa).

R21 contributes to the dUMP binding site. H51 contributes to the (6R)-5,10-methylene-5,6,7,8-tetrahydrofolate binding site. Residue 126–127 coordinates dUMP; the sequence is RR. C146 serves as the catalytic Nucleophile. DUMP contacts are provided by residues 166–169, N177, and 207–209; these read RSAD and HIY. Residue D169 participates in (6R)-5,10-methylene-5,6,7,8-tetrahydrofolate binding. Position 263 (A263) interacts with (6R)-5,10-methylene-5,6,7,8-tetrahydrofolate.

It belongs to the thymidylate synthase family. Bacterial-type ThyA subfamily. As to quaternary structure, homodimer.

The protein resides in the cytoplasm. It catalyses the reaction dUMP + (6R)-5,10-methylene-5,6,7,8-tetrahydrofolate = 7,8-dihydrofolate + dTMP. The protein operates within pyrimidine metabolism; dTTP biosynthesis. In terms of biological role, catalyzes the reductive methylation of 2'-deoxyuridine-5'-monophosphate (dUMP) to 2'-deoxythymidine-5'-monophosphate (dTMP) while utilizing 5,10-methylenetetrahydrofolate (mTHF) as the methyl donor and reductant in the reaction, yielding dihydrofolate (DHF) as a by-product. This enzymatic reaction provides an intracellular de novo source of dTMP, an essential precursor for DNA biosynthesis. This chain is Thymidylate synthase, found in Vesicomyosocius okutanii subsp. Calyptogena okutanii (strain HA).